The primary structure comprises 211 residues: Rho-related GTP-binding protein RhoF (211 aa).

Position 1 is an N-acetylmethionine (M1). 26–33 (GDGGCGKT) is a binding site for GTP. Positions 48–56 (YAPSVFEKY) match the Effector region motif. Residues 73–77 (DTAGQ) and 131–134 (CKTD) contribute to the GTP site. The residue at position 208 (C208) is a Cysteine methyl ester. C208 is lipidated: S-geranylgeranyl cysteine. The propeptide at 209 to 211 (LLL) is removed in mature form.

It belongs to the small GTPase superfamily. Rho family.

It is found in the cell membrane. The protein localises to the cytoplasm. It localises to the cytoskeleton. Plasma membrane-associated small GTPase which cycles between an active GTP-bound and an inactive GDP-bound state. Causes the formation of thin, actin-rich surface projections called filopodia. Functions cooperatively with CDC42 and Rac to generate additional structures, increasing the diversity of actin-based morphology. The sequence is that of Rho-related GTP-binding protein RhoF (RHOF) from Homo sapiens (Human).